The sequence spans 63 residues: Cecropin-A1 (63 aa).

An N-terminal signal peptide occupies residues 1–19; the sequence is MNFYNIFVFVALILAITIG. The residue at position 62 (arginine 62) is an Arginine amide.

It belongs to the cecropin family.

It localises to the secreted. Cecropins have lytic and antibacterial activity against several Gram-positive and Gram-negative bacteria. This is Cecropin-A1 (CecA1) from Drosophila simulans (Fruit fly).